Here is a 158-residue protein sequence, read N- to C-terminus: Style cell-cycle inhibitor 1-B (158 aa).

Basic and acidic residues-rich tracts occupy residues 1 to 11 (MGSDKKTTEEK) and 22 to 47 (PRDE…DKSK). Residues 1–88 (MGSDKKTTEE…DKSKNKFEEL (88 aa)) are disordered. 2 stretches are compositionally biased toward basic residues: residues 48–58 (KEKHKSHKSKC) and 67–81 (GEKH…KDKS).

As to expression, specifically expressed in flowers pistils, especially in stigmas and styles. Barely detected in roots, stems, leaves, sepals, petals and stamen.

It is found in the nucleus. Component of the auxin signaling transduction pathway that regulates cell proliferation and differentiation during flowers stigmas and styles development. Involved in the regulation of auxin-related genes. The chain is Style cell-cycle inhibitor 1-B from Nicotiana tabacum (Common tobacco).